The sequence spans 371 residues: 3-isopropylmalate dehydrogenase (371 aa).

Residue 77 to 90 participates in NAD(+) binding; sequence GPKWDDNPPHLRPE. Residues R97, R107, R135, and D224 each coordinate substrate. Residues D224, D248, and D252 each coordinate Mg(2+). 282 to 294 serves as a coordination point for NAD(+); that stretch reads GSAPDIAGMNKAN.

Belongs to the isocitrate and isopropylmalate dehydrogenases family. LeuB type 1 subfamily. In terms of assembly, homodimer. Mg(2+) is required as a cofactor. It depends on Mn(2+) as a cofactor.

The protein resides in the cytoplasm. The enzyme catalyses (2R,3S)-3-isopropylmalate + NAD(+) = 4-methyl-2-oxopentanoate + CO2 + NADH. The protein operates within amino-acid biosynthesis; L-leucine biosynthesis; L-leucine from 3-methyl-2-oxobutanoate: step 3/4. Its function is as follows. Catalyzes the oxidation of 3-carboxy-2-hydroxy-4-methylpentanoate (3-isopropylmalate) to 3-carboxy-4-methyl-2-oxopentanoate. The product decarboxylates to 4-methyl-2 oxopentanoate. The protein is 3-isopropylmalate dehydrogenase of Geobacillus kaustophilus (strain HTA426).